Here is a 356-residue protein sequence, read N- to C-terminus: S-adenosylmethionine:tRNA ribosyltransferase-isomerase (356 aa).

The protein belongs to the QueA family. As to quaternary structure, monomer.

It is found in the cytoplasm. It carries out the reaction 7-aminomethyl-7-carbaguanosine(34) in tRNA + S-adenosyl-L-methionine = epoxyqueuosine(34) in tRNA + adenine + L-methionine + 2 H(+). The protein operates within tRNA modification; tRNA-queuosine biosynthesis. Functionally, transfers and isomerizes the ribose moiety from AdoMet to the 7-aminomethyl group of 7-deazaguanine (preQ1-tRNA) to give epoxyqueuosine (oQ-tRNA). The sequence is that of S-adenosylmethionine:tRNA ribosyltransferase-isomerase from Yersinia pseudotuberculosis serotype O:3 (strain YPIII).